A 512-amino-acid polypeptide reads, in one-letter code: 2-isopropylmalate synthase (512 aa).

Residues 5-268 (LIIFDTTLRD…ELGIDTQHIV (264 aa)) enclose the Pyruvate carboxyltransferase domain. Aspartate 14, histidine 202, histidine 204, and asparagine 239 together coordinate Mn(2+). Residues 394–512 (GFVSLSQRSE…SKAERVAAQG (119 aa)) form a regulatory domain region.

Belongs to the alpha-IPM synthase/homocitrate synthase family. LeuA type 1 subfamily. In terms of assembly, homodimer. It depends on Mn(2+) as a cofactor.

The protein resides in the cytoplasm. It catalyses the reaction 3-methyl-2-oxobutanoate + acetyl-CoA + H2O = (2S)-2-isopropylmalate + CoA + H(+). It functions in the pathway amino-acid biosynthesis; L-leucine biosynthesis; L-leucine from 3-methyl-2-oxobutanoate: step 1/4. Catalyzes the condensation of the acetyl group of acetyl-CoA with 3-methyl-2-oxobutanoate (2-ketoisovalerate) to form 3-carboxy-3-hydroxy-4-methylpentanoate (2-isopropylmalate). The protein is 2-isopropylmalate synthase of Paracidovorax citrulli (strain AAC00-1) (Acidovorax citrulli).